The sequence spans 283 residues: Hydroxyacylglutathione hydrolase-like protein (283 aa).

Histidine 54, histidine 56, aspartate 58, histidine 59, histidine 110, aspartate 134, and histidine 173 together coordinate Zn(2+).

This sequence belongs to the metallo-beta-lactamase superfamily. Glyoxalase II family. It depends on Zn(2+) as a cofactor.

Hydrolase acting on ester bonds. The polypeptide is Hydroxyacylglutathione hydrolase-like protein (Haghl) (Mus musculus (Mouse)).